Here is a 321-residue protein sequence, read N- to C-terminus: Probable NAD(P)H-dependent D-xylose reductase xyl1 (321 aa).

Residue Tyr50 is the Proton donor of the active site. Substrate is bound at residue His112. NAD(+)-binding positions include 166-167 (SN), 215-224 (SSFGPLSFVE), and 271-281 (KSNDPTRLAQN).

The protein belongs to the aldo/keto reductase family.

It carries out the reaction xylitol + NAD(+) = D-xylose + NADH + H(+). The enzyme catalyses xylitol + NADP(+) = D-xylose + NADPH + H(+). The protein operates within carbohydrate metabolism; D-xylose degradation. Functionally, catalyzes the initial reaction in the xylose utilization pathway by reducing D-xylose into xylitol. Xylose is a major component of hemicelluloses such as xylan. Most fungi utilize D-xylose via three enzymatic reactions, xylose reductase (XR), xylitol dehydrogenase (XDH), and xylulokinase, to form xylulose 5-phosphate, which enters pentose phosphate pathway. In Neosartorya fischeri (strain ATCC 1020 / DSM 3700 / CBS 544.65 / FGSC A1164 / JCM 1740 / NRRL 181 / WB 181) (Aspergillus fischerianus), this protein is Probable NAD(P)H-dependent D-xylose reductase xyl1 (xyl1).